We begin with the raw amino-acid sequence, 246 residues long: Probable transcriptional regulatory protein CLJ_B3338 (246 aa).

This sequence belongs to the TACO1 family.

The protein resides in the cytoplasm. The sequence is that of Probable transcriptional regulatory protein CLJ_B3338 from Clostridium botulinum (strain 657 / Type Ba4).